The sequence spans 3391 residues: Genome polyprotein (3391 aa).

The tract at residues 1–15 is interaction with host EXOC1; sequence MNNQRKKAKNTPFNM. Residues 1 to 101 lie on the Cytoplasmic side of the membrane; that stretch reads MNNQRKKAKN…LNILNRRRRS (101 aa). The tract at residues 37 to 72 is hydrophobic; homodimerization of capsid protein C; that stretch reads MLQGRGPLKLFMALVAFLRFLTIPPTAGILKRWGTI. Positions 101–114 are cleaved as a propeptide — ER anchor for the capsid protein C, removed in mature form by serine protease NS3; the sequence is SAGMIIMLIPTVMA. Residues 102 to 122 form a helical membrane-spanning segment; the sequence is AGMIIMLIPTVMAFHLTTRNG. At 123–238 the chain is on the extracellular side; that stretch reads EPHMIVSRQE…GAWKHAQRIE (116 aa). N-linked (GlcNAc...) asparagine; by host glycosylation is present at Asn183. The chain crosses the membrane as a helical span at residues 239 to 259; the sequence is TWILRHPGFTIMAAILAYTIG. Residues 260–265 are Cytoplasmic-facing; sequence TTHFQR. A helical membrane pass occupies residues 266-280; sequence ALIFILLTAVAPSMT. Residues 281–725 lie on the Extracellular side of the membrane; the sequence is MRCIGISNRD…LHQVFGAIYG (445 aa). Cystine bridges form between Cys283/Cys310, Cys340/Cys401, Cys354/Cys385, and Cys372/Cys396. The N-linked (GlcNAc...) asparagine; by host glycan is linked to Asn347. Residues 378–391 form a fusion peptide region; that stretch reads DRGWGNGCGLFGKG. N-linked (GlcNAc...) asparagine; by host glycosylation is present at Asn433. 2 cysteine pairs are disulfide-bonded: Cys465–Cys565 and Cys582–Cys613. The chain crosses the membrane as a helical span at residues 726-746; it reads AAFSGVSWTMKILIGVIITWI. Topologically, residues 747 to 752 are cytoplasmic; the sequence is GMNSRS. The helical transmembrane segment at 753–773 threads the bilayer; the sequence is TSLSVSLVLVGIVTLYLGVMV. Over 774-1195 the chain is Extracellular; the sequence is QADSGCVVSW…MVGATMTDDI (422 aa). Disulfide bonds link Cys779-Cys790, Cys830-Cys918, Cys954-Cys998, Cys1055-Cys1104, Cys1066-Cys1088, and Cys1087-Cys1091. N-linked (GlcNAc...) asparagine; by host glycans are attached at residues Asn905 and Asn982. Asn1134 is a glycosylation site (N-linked (GlcNAc...) asparagine; by host). The helical transmembrane segment at 1196-1220 threads the bilayer; it reads GMGVTYLALLAAFKVRPTFAAGLLL. Residues 1221–1226 lie on the Cytoplasmic side of the membrane; sequence RKLTSK. A helical transmembrane segment spans residues 1227–1245; it reads ELMMTTIGIVLLSQSTIPE. Residues 1246–1269 are Lumenal-facing; it reads TILELTDALALGMMVLKMVRNMEK. A helical transmembrane segment spans residues 1270-1290; sequence YQLAVTIMAILCVPNAVILQN. Position 1291 (Ala1291) is a topological domain, cytoplasmic. A helical membrane pass occupies residues 1292 to 1310; it reads WKVSCTILAVVSVSPLLLT. At 1311 to 1317 the chain is on the lumenal side; sequence SSQQKTD. Residues 1318-1338 form a helical membrane-spanning segment; that stretch reads WIPLALTIKGLNPTAIFLTTL. The Cytoplasmic segment spans residues 1339–1346; sequence SRTSKKRS. A helical transmembrane segment spans residues 1347 to 1367; that stretch reads WPLNEAIMAVGMVSILASSLL. The Lumenal portion of the chain corresponds to 1368–1370; that stretch reads KND. The helical transmembrane segment at 1371 to 1391 threads the bilayer; sequence IPMTGPLVAGGLLTVCYVLTG. The Cytoplasmic segment spans residues 1392–1447; it reads RSADLELERAADVKWEDQAEISGSSPILSITISEDGSMSIKNEEEEQTLTILIRTG. Positions 1398-1437 are interacts with and activates NS3 protease; it reads LERAADVKWEDQAEISGSSPILSITISEDGSMSIKNEEEE. The helical intramembrane region spans 1448–1468; the sequence is LLVISGLFPVSIPITAAAWYL. At 1469–2147 the chain is on the cytoplasmic side; sequence WEVKKQRAGV…LSELPETLET (679 aa). The region spanning 1476–1653 is the Peptidase S7 domain; it reads AGVLWDVPSP…EKSIEDNPEI (178 aa). Catalysis depends on charge relay system; for serine protease NS3 activity residues His1526, Asp1550, and Ser1610. Residues 1655–1811 form the Helicase ATP-binding domain; it reads DDIFRKRRLT…QSNAPIIDEE (157 aa). Residues 1659-1662 are important for RNA-binding; it reads RKRR. Residue 1668 to 1675 coordinates ATP; sequence LHPGAGKT. A DEAH box motif is present at residues 1759–1762; that stretch reads DEAH. Positions 1821 to 1988 constitute a Helicase C-terminal domain; that stretch reads SGHEWVTDFK…IIPSMFEPER (168 aa). The residue at position 1863 (Lys1863) is an N6-acetyllysine; by host. The chain crosses the membrane as a helical span at residues 2148–2168; it reads LLLLTLLATVTGGIFLFLMSG. Topologically, residues 2169 to 2170 are lumenal; the sequence is RG. An intramembrane region (helical) is located at residues 2171-2191; that stretch reads IGKMTLGMCCIITASVLLWYA. Residue Gln2192 is a topological domain, lumenal. The helical transmembrane segment at 2193–2213 threads the bilayer; the sequence is IQPHWIAASIILEFFLIVLLI. Residues 2214-2228 lie on the Cytoplasmic side of the membrane; the sequence is PEPEKQRTPQDNQLT. A helical membrane pass occupies residues 2229–2249; sequence YVVIAILTVVAATMANEMGFL. At 2250-2274 the chain is on the lumenal side; that stretch reads EKTKKDLGLGSIATQQPESNILDID. An intramembrane region (helical) is located at residues 2275 to 2295; that stretch reads LRPASAWTLYAVATTFVTPML. Over 2296–2316 the chain is Lumenal; it reads RHSIENSSVNVSLTAIANQAT. N-linked (GlcNAc...) asparagine; by host glycans are attached at residues Asn2301 and Asn2305. The helical intramembrane region spans 2317–2337; the sequence is VLMGLGKGWPLSKMDIGVPLL. Over 2338 to 2347 the chain is Lumenal; the sequence is AIGCYSQVNP. Residues 2348–2368 traverse the membrane as a helical segment; it reads ITLTAALLLLVAHYAIIGPGL. Over 2369-2413 the chain is Cytoplasmic; it reads QAKATREAQKRAAAGIMKNPTVDGITVIDLDPIPYDPKFEKQLGQ. A helical membrane pass occupies residues 2414–2434; that stretch reads VMLLVLCVTQVLMMRTTWALC. At 2435–2459 the chain is on the lumenal side; the sequence is EALTLATGPISTLWEGNPGRFWNTT. N-linked (GlcNAc...) asparagine; by host glycosylation is present at Asn2457. The chain crosses the membrane as a helical span at residues 2460 to 2480; the sequence is IAVSMANIFRGSYLAGAGLLF. Residues 2481–3391 are Cytoplasmic-facing; it reads SIMKNTTNTR…REEEEAGVLW (911 aa). The 263-residue stretch at 2493-2755 folds into the mRNA cap 0-1 NS5-type MT domain; the sequence is TGNIGETLGE…DVDLGSGTRN (263 aa). An S-adenosyl-L-methionine-binding site is contributed by Ser2547. Residue Ser2547 is modified to Phosphoserine. The active-site For 2'-O-MTase activity is Lys2552. Positions 2568 to 2571 match the SUMO-interacting motif motif; sequence VVDL. Positions 2577, 2578, 2595, 2596, 2622, and 2623 each coordinate S-adenosyl-L-methionine. The active-site For 2'-O-MTase activity is Asp2637. Ile2638 contributes to the S-adenosyl-L-methionine binding site. Catalysis depends on for 2'-O-MTase activity residues Lys2672 and Glu2708. Tyr2710 serves as a coordination point for S-adenosyl-L-methionine. 4 residues coordinate Zn(2+): Glu2929, His2933, Cys2938, and Cys2941. The region spanning 3020–3169 is the RdRp catalytic domain; it reads AMYADDTAGW…PLDDRFASAL (150 aa). Zn(2+) is bound by residues His3203, Cys3219, and Cys3338.

The protein in the N-terminal section; belongs to the class I-like SAM-binding methyltransferase superfamily. mRNA cap 0-1 NS5-type methyltransferase family. In terms of assembly, homodimer. Interacts (via N-terminus) with host EXOC1 (via C-terminus); this interaction results in EXOC1 degradation through the proteasome degradation pathway. Forms heterodimers with envelope protein E in the endoplasmic reticulum and Golgi. As to quaternary structure, homodimer; in the endoplasmic reticulum and Golgi. Interacts with protein prM. Interacts with non-structural protein 1. In terms of assembly, homodimer; Homohexamer when secreted. Interacts with envelope protein E. Interacts with host PRKAA1. Interacts (via N-terminus) with serine protease NS3. As to quaternary structure, forms a heterodimer with serine protease NS3. May form homooligomers. In terms of assembly, forms a heterodimer with NS2B. Interacts with NS4B. Interacts with unphosphorylated RNA-directed RNA polymerase NS5; this interaction stimulates RNA-directed RNA polymerase NS5 guanylyltransferase activity. Interacts with host SHFL. Interacts with host MAVS; this interaction inhibits the synthesis of IFN-beta. Interacts with host SHFL. Interacts with host AUP1; the interaction occurs in the presence of Dengue virus NS4B and induces lipophagy which facilitates production of virus progeny particles. May interact with host SRPRA and SEC61G. As to quaternary structure, interacts with serine protease NS3. In terms of assembly, homodimer. Interacts with host STAT2; this interaction inhibits the phosphorylation of the latter, and, when all viral proteins are present (polyprotein), targets STAT2 for degradation. Interacts with serine protease NS3. Interacts with host PAF1 complex; the interaction may prevent the recruitment of the PAF1 complex to interferon-responsive genes, and thus reduces the immune response. Post-translationally, specific enzymatic cleavages in vivo yield mature proteins. Cleavages in the lumen of endoplasmic reticulum are performed by host signal peptidase, whereas cleavages in the cytoplasmic side are performed by serine protease NS3. Signal cleavage at the 2K-4B site requires a prior NS3 protease-mediated cleavage at the 4A-2K site. Cleaved in post-Golgi vesicles by a host furin, releasing the mature small envelope protein M, and peptide pr. This cleavage is incomplete as up to 30% of viral particles still carry uncleaved prM. In terms of processing, N-glycosylated. Post-translationally, N-glycosylated. The excreted form is glycosylated and this is required for efficient secretion of the protein from infected cells. Acetylated by host KAT5. Acetylation modulates NS3 RNA-binding and unwinding activities and plays an important positive role for viral replication. In terms of processing, phosphorylated on serines residues. This phosphorylation may trigger NS5 nuclear localization. Post-translationally, sumoylation of RNA-directed RNA polymerase NS5 increases NS5 protein stability allowing proper viral RNA replication.

The protein resides in the virion. The protein localises to the host nucleus. It localises to the host cytoplasm. Its subcellular location is the host perinuclear region. It is found in the secreted. The protein resides in the virion membrane. The protein localises to the host endoplasmic reticulum membrane. It localises to the host mitochondrion. The enzyme catalyses Selective hydrolysis of -Xaa-Xaa-|-Yaa- bonds in which each of the Xaa can be either Arg or Lys and Yaa can be either Ser or Ala.. The catalysed reaction is RNA(n) + a ribonucleoside 5'-triphosphate = RNA(n+1) + diphosphate. It catalyses the reaction a ribonucleoside 5'-triphosphate + H2O = a ribonucleoside 5'-diphosphate + phosphate + H(+). It carries out the reaction ATP + H2O = ADP + phosphate + H(+). The enzyme catalyses a 5'-end (5'-triphosphoguanosine)-ribonucleoside in mRNA + S-adenosyl-L-methionine = a 5'-end (N(7)-methyl 5'-triphosphoguanosine)-ribonucleoside in mRNA + S-adenosyl-L-homocysteine. The catalysed reaction is a 5'-end (N(7)-methyl 5'-triphosphoguanosine)-ribonucleoside in mRNA + S-adenosyl-L-methionine = a 5'-end (N(7)-methyl 5'-triphosphoguanosine)-(2'-O-methyl-ribonucleoside) in mRNA + S-adenosyl-L-homocysteine + H(+). In terms of biological role, plays a role in virus budding by binding to the cell membrane and gathering the viral RNA into a nucleocapsid that forms the core of a mature virus particle. During virus entry, may induce genome penetration into the host cytoplasm after hemifusion induced by the surface proteins. Can migrate to the cell nucleus where it modulates host functions. Overcomes the anti-viral effects of host EXOC1 by sequestering and degrading the latter through the proteasome degradation pathway. Its function is as follows. Inhibits RNA silencing by interfering with host Dicer. Functionally, prevents premature fusion activity of envelope proteins in trans-Golgi by binding to envelope protein E at pH6.0. After virion release in extracellular space, gets dissociated from E dimers. Acts as a chaperone for envelope protein E during intracellular virion assembly by masking and inactivating envelope protein E fusion peptide. prM is the only viral peptide matured by host furin in the trans-Golgi network probably to avoid catastrophic activation of the viral fusion activity in acidic Golgi compartment prior to virion release. prM-E cleavage is inefficient, and many virions are only partially matured. These uncleaved prM would play a role in immune evasion. In terms of biological role, may play a role in virus budding. Exerts cytotoxic effects by activating a mitochondrial apoptotic pathway through M ectodomain. May display a viroporin activity. Its function is as follows. Binds to host cell surface receptor and mediates fusion between viral and cellular membranes. Envelope protein is synthesized in the endoplasmic reticulum in the form of heterodimer with protein prM. They play a role in virion budding in the ER, and the newly formed immature particle is covered with 60 spikes composed of heterodimer between precursor prM and envelope protein E. The virion is transported to the Golgi apparatus where the low pH causes dissociation of PrM-E heterodimers and formation of E homodimers. prM-E cleavage is inefficient, and many virions are only partially matured. These uncleaved prM would play a role in immune evasion. Functionally, involved in immune evasion, pathogenesis and viral replication. Once cleaved off the polyprotein, is targeted to three destinations: the viral replication cycle, the plasma membrane and the extracellular compartment. Essential for viral replication. Required for formation of the replication complex and recruitment of other non-structural proteins to the ER-derived membrane structures. Excreted as a hexameric lipoparticle that plays a role against host immune response. Antagonizing the complement function. Binds to the host macrophages and dendritic cells. Inhibits signal transduction originating from Toll-like receptor 3 (TLR3). Mediates complement activation, which may contribute to the pathogenesis of the vascular leakage that occurs in severe dengue disease. Activates autophagy through the AMPK/ERK/mTOR signaling pathway. Mechanistically, acts as the assembly platform for STK11-AMPK interactions and promotes STK11-AMPK interactions. In turn, promotes phosphorylation of the AMPK kinase structural domain and activates AMPK, thereby positively regulating the AMPK/ERK/mTOR signaling pathway and inducing autophagy. Disrupts the host endothelial glycocalyx layer of host pulmonary microvascular endothelial cells, inducing degradation of sialic acid and shedding of heparan sulfate proteoglycans. NS1 induces expression of sialidases, heparanase, and activates cathepsin L, which activates heparanase via enzymatic cleavage. These effects are probably linked to the endothelial hyperpermeability observed in severe dengue disease. In terms of biological role, component of the viral RNA replication complex that functions in virion assembly and antagonizes the host immune response. Its function is as follows. Required cofactor for the serine protease function of NS3. May have membrane-destabilizing activity and form viroporins. Functionally, displays three enzymatic activities: serine protease, NTPase and RNA helicase. NS3 serine protease, in association with NS2B, performs its autocleavage and cleaves the polyprotein at dibasic sites in the cytoplasm: C-prM, NS2A-NS2B, NS2B-NS3, NS3-NS4A, NS4A-2K and NS4B-NS5. NS3 RNA helicase binds RNA and unwinds dsRNA in the 3' to 5' direction. Regulates the ATPase activity of the NS3 helicase activity. NS4A allows NS3 helicase to conserve energy during unwinding. Plays a role in the inhibition of the host innate immune response. Interacts with host MAVS and thereby prevents the interaction between RIGI and MAVS. In turn, IFN-beta production is impaired. Interacts with host AUP1 which mediates induction of lipophagy in host cells and facilitates production of virus progeny particles. In terms of biological role, functions as a signal peptide for NS4B and is required for the interferon antagonism activity of the latter. Its function is as follows. Induces the formation of ER-derived membrane vesicles where the viral replication takes place. Inhibits interferon (IFN)-induced host STAT1 phosphorylation and nuclear translocation, thereby preventing the establishment of cellular antiviral state by blocking the IFN-alpha/beta pathway. Functionally, replicates the viral (+) and (-) RNA genome, and performs the capping of genomes in the cytoplasm. NS5 methylates viral RNA cap at guanine N-7 and ribose 2'-O positions. Besides its role in RNA genome replication, also prevents the establishment of cellular antiviral state by blocking the interferon-alpha/beta (IFN-alpha/beta) signaling pathway. Inhibits host TYK2 and STAT2 phosphorylation, thereby preventing activation of JAK-STAT signaling pathway. May reduce immune responses by preventing the recruitment of the host PAF1 complex to interferon-responsive genes. The protein is Genome polyprotein of Aedimorphus (Red guenon).